Consider the following 347-residue polypeptide: NADH-ubiquinone oxidoreductase chain 2 (347 aa).

10 consecutive transmembrane segments (helical) span residues 13 to 33, 55 to 75, 96 to 116, 122 to 142, 151 to 171, 178 to 198, 199 to 219, 237 to 257, 274 to 294, and 326 to 346; these read IFTGTLITALSSHWFFAWLGL, AAIKYFLTQATASMILLMAIL, LMIVTALAMKLGMAPFHFWVP, VPLTSGLLLLTWQKLAPISIM, TNILLTLSILSILVGGWGGLN, ILAYSSITHMGWMMAVLPYNP, DITILNLIIYIILTTTAFLIL, LTWLMPLIPSTLLSLGGLPPL, GNLITPTIMAIITLLNLYFYV, and LPTLTILTTLLLPISPLILSI.

The protein belongs to the complex I subunit 2 family. In terms of assembly, core subunit of respiratory chain NADH dehydrogenase (Complex I) which is composed of 45 different subunits. Interacts with TMEM242.

Its subcellular location is the mitochondrion inner membrane. It carries out the reaction a ubiquinone + NADH + 5 H(+)(in) = a ubiquinol + NAD(+) + 4 H(+)(out). Its function is as follows. Core subunit of the mitochondrial membrane respiratory chain NADH dehydrogenase (Complex I) which catalyzes electron transfer from NADH through the respiratory chain, using ubiquinone as an electron acceptor. Essential for the catalytic activity and assembly of complex I. This is NADH-ubiquinone oxidoreductase chain 2 from Pongo abelii (Sumatran orangutan).